The following is a 273-amino-acid chain: Large ribosomal subunit protein uL2 (273 aa).

Residues Arg221 to Thr263 form a disordered region. Positions Lys253–Thr263 are enriched in basic residues.

The protein belongs to the universal ribosomal protein uL2 family. In terms of assembly, part of the 50S ribosomal subunit. Forms a bridge to the 30S subunit in the 70S ribosome.

One of the primary rRNA binding proteins. Required for association of the 30S and 50S subunits to form the 70S ribosome, for tRNA binding and peptide bond formation. It has been suggested to have peptidyltransferase activity; this is somewhat controversial. Makes several contacts with the 16S rRNA in the 70S ribosome. In Histophilus somni (strain 129Pt) (Haemophilus somnus), this protein is Large ribosomal subunit protein uL2.